The chain runs to 483 residues: MSAQINNIRPEFDREIVDIVDYVMNYEISSKVAYDTAHYCLLDTLGCGLEALEYPACKKLLGPIVPGTVVPNGVRVPGTQFQLDPVQAAFNIGAMIRWLDFNDTWLAAEWGHPSDNLGGILATADWLSRNAVASGKAPLTMKQVLTAMIKAHEIQGCIALENSFNRVGLDHVLLVKVASTAVVAEMLGLTREEILNAVSLAWVDGQSLRTYRHAPNTGTRKSWAAGDATSRAVRLALMAKTGEMGYPSALTAPVWGFYDVSFKGESFRFQRPYGSYVMENVLFKISFPAEFHSQTAVEAAMTLYEQMQAAGKTAADIEKVTIRTHEACIRIIDKKGPLNNPADRDHCIQYMVAIPLLFGRLTAADYEDNVAQDKRIDALREKINCFEDPAFTADYHDPEKRAIANAITLEFTDGTRFEEVVVEYPIGHARRRQDGIPKLVDKFKINLARQFPTRQQQRILEVSLDRARLEQMPVNEYLDLYVI.

The protein belongs to the PrpD family. Monomer.

The enzyme catalyses (2S,3S)-2-methylcitrate = 2-methyl-cis-aconitate + H2O. The catalysed reaction is citrate = D-threo-isocitrate. It functions in the pathway organic acid metabolism; propanoate degradation. It participates in carbohydrate metabolism; tricarboxylic acid cycle; isocitrate from oxaloacetate: step 2/2. Functionally, involved in the catabolism of short chain fatty acids (SCFA) via the tricarboxylic acid (TCA)(acetyl degradation route) and via the 2-methylcitrate cycle I (propionate degradation route). Catalyzes the dehydration of 2-methylcitrate (2-MC) to yield the cis isomer of 2-methyl-aconitate. It is also able to catalyze the dehydration of citrate and the hydration of cis-aconitate at a lower rate. Due to its broad substrate specificity, it seems to be responsible for the residual aconitase activity of the acnAB-null mutant. This Escherichia coli (strain K12) protein is 2-methylcitrate dehydratase.